The sequence spans 537 residues: Sodium/hydrogen exchanger 9B2 (537 aa).

Over residues 1–10 the composition is skewed to basic and acidic residues; sequence MGDEDKRITY. Residues 1 to 28 are disordered; that stretch reads MGDEDKRITYEDSEPSTGMNYTPSMHQE. Residues 1 to 86 lie on the Cytoplasmic side of the membrane; the sequence is MGDEDKRITY…ACPPHGLLDR (86 aa). Residues 15–27 show a composition bias toward polar residues; sequence PSTGMNYTPSMHQ. Ser-49 is modified (phosphoserine). Residues 87–104 form a helical membrane-spanning segment; it reads VITNVTIIVLLWAVVWSI. The Extracellular portion of the chain corresponds to 105–113; that stretch reads TGSECLPGG. A helical transmembrane segment spans residues 114 to 133; the sequence is NLFGIIILFYCAIIGGKLLG. The Cytoplasmic portion of the chain corresponds to 134–144; the sequence is LIKLPTLPPLP. The helical transmembrane segment at 145–161 threads the bilayer; it reads SLLGMLLAGFLIRNIPV. The Extracellular portion of the chain corresponds to 162 to 171; it reads INDNVQIKHK. The helical transmembrane segment at 172 to 189 threads the bilayer; the sequence is WSSSLRSIALSIILVRAG. At 190-200 the chain is on the cytoplasmic side; sequence LGLDSKALKKL. The chain crosses the membrane as a helical span at residues 201 to 227; the sequence is KGVCVRLSMGPCIVEACTSALLAHYLL. Residues 228 to 233 are Extracellular-facing; sequence GLPWQW. Residues 234–242 traverse the membrane as a helical segment; sequence GFILGFVLG. Residues 243–270 lie on the Cytoplasmic side of the membrane; it reads AVSPAVVVPSMLLLQGGGYGVEKGVPTL. Positions 244, 275, 278, and 279 each coordinate Na(+). A helical transmembrane segment spans residues 271-290; that stretch reads LMAAGSFDDILAITGFNTCL. The Extracellular segment spans residues 291–300; that stretch reads GIAFSTGSTV. The helical transmembrane segment at 301-324 threads the bilayer; it reads FNVLRGVLEVVIGVATGSVLGFFI. Residues 325–339 lie on the Cytoplasmic side of the membrane; sequence QYFPSRDQDKLVCKR. The helical transmembrane segment at 340–357 threads the bilayer; sequence TFLVLGLSVLAVFSSVHF. The Extracellular segment spans residues 358–361; it reads GFPG. Residues 362 to 373 form a helical membrane-spanning segment; the sequence is SGGLCTLVMAFL. The Cytoplasmic segment spans residues 374-390; that stretch reads AGMGWTSEKAEVEKIIA. A helical membrane pass occupies residues 391-411; sequence VAWDIFQPLLFGLIGAEVSIA. Residues 412 to 417 are Extracellular-facing; the sequence is SLRPET. Residues 418 to 440 traverse the membrane as a helical segment; that stretch reads VGLCVATVGIAVLIRILTTFLMV. Over 441–461 the chain is Cytoplasmic; the sequence is CFAGFNLKEKIFISFAWLPKA. Residues 462–473 traverse the membrane as a helical segment; sequence TVQAAIGSVALD. Over 474 to 486 the chain is Extracellular; sequence TARSHGEKQLEDY. Residues 487 to 509 traverse the membrane as a helical segment; that stretch reads GMDVLTVAFLSILITAPIGSLLI. Topologically, residues 510–537 are cytoplasmic; that stretch reads GLLGPRLLQKVEHQNKDEEVQGETSVQV.

It belongs to the monovalent cation:proton antiporter 1 (CPA1) transporter (TC 2.A.36) family. Homodimer. Dimerization is essential for SLC9B2 activity. Lipids seem to play a role in the stabilization of the dimerization subdomain. In terms of tissue distribution, widely expressed. High levels detected in the distal tubules of the kidney nephron. Detected in red blood cells (at protein level).

The protein localises to the cell membrane. It localises to the mitochondrion membrane. The protein resides in the endosome membrane. Its subcellular location is the recycling endosome membrane. It is found in the cytoplasmic vesicle. The protein localises to the secretory vesicle. It localises to the synaptic vesicle membrane. The protein resides in the cell projection. Its subcellular location is the cilium. It is found in the flagellum membrane. The protein localises to the basolateral cell membrane. It localises to the apical cell membrane. The catalysed reaction is Li(+)(out) + H(+)(in) = Li(+)(in) + H(+)(out). The enzyme catalyses Li(+)(in) + Na(+)(out) = Li(+)(out) + Na(+)(in). It carries out the reaction Na(+)(in) + H(+)(out) = Na(+)(out) + H(+)(in). Its activity is regulated as follows. Allosterically inhibited by the N-terminal domain. Inhibited by phloretin. Functionally, electroneutral Na(+) Li(+)/H(+) antiporter that extrudes Na(+) or Li(+) in exchange for external protons across the membrane. Uses the proton gradient/membrane potential to extrude sodium. Contributes to the regulation of intracellular pH and sodium homeostasis. Also able to mediate Na(+)/Li(+) antiporter activity in kidney. May play a physiological role in renal tubular function and blood pressure homeostasis. Plays an important role for insulin secretion and clathrin-mediated endocytosis in beta-cells. Involved in sperm motility and fertility. It is controversial whether SLC9B2 plays a role in osteoclast differentiation or not. The polypeptide is Sodium/hydrogen exchanger 9B2 (Homo sapiens (Human)).